The sequence spans 262 residues: 3-deoxy-manno-octulosonate cytidylyltransferase (262 aa).

Belongs to the KdsB family.

Its subcellular location is the cytoplasm. The catalysed reaction is 3-deoxy-alpha-D-manno-oct-2-ulosonate + CTP = CMP-3-deoxy-beta-D-manno-octulosonate + diphosphate. It functions in the pathway nucleotide-sugar biosynthesis; CMP-3-deoxy-D-manno-octulosonate biosynthesis; CMP-3-deoxy-D-manno-octulosonate from 3-deoxy-D-manno-octulosonate and CTP: step 1/1. Its pathway is bacterial outer membrane biogenesis; lipopolysaccharide biosynthesis. Functionally, activates KDO (a required 8-carbon sugar) for incorporation into bacterial lipopolysaccharide in Gram-negative bacteria. In Koribacter versatilis (strain Ellin345), this protein is 3-deoxy-manno-octulosonate cytidylyltransferase.